A 330-amino-acid polypeptide reads, in one-letter code: NmrA-like family domain-containing oxidoreductase notO (330 aa).

Residues V12–L17, H38–Q42, R59–S60, I80–A82, and L160–G163 each bind NADP(+). The chain crosses the membrane as a helical span at residues V12 to I32. The segment at S158–A202 is interaction with ASS1. 2 N-linked (GlcNAc...) asparagine glycosylation sites follow: N180 and N207.

It belongs to the NmrA-type oxidoreductase family.

It localises to the membrane. In terms of biological role, nmrA-like family domain-containing oxidoreductase; part of the gene cluster that mediates the biosynthesis of notoamide, a fungal indole alkaloid that belongs to a family of natural products containing a characteristic bicyclo[2.2.2]diazaoctane core. The first step of notoamide biosynthesis involves coupling of L-proline and L-tryptophan by the bimodular NRPS notE, to produce cyclo-L-tryptophan-L-proline called brevianamide F. The reverse prenyltransferase notF then acts as a deoxybrevianamide E synthase and converts brevianamide F to deoxybrevianamide E via reverse prenylation at C-2 of the indole ring leading to the bicyclo[2.2.2]diazaoctane core. Deoxybrevianamide E is further hydroxylated at C-6 of the indole ring, likely catalyzed by the cytochrome P450 monooxygenase notG, to yield 6-hydroxy-deoxybrevianamide E. 6-hydroxy-deoxybrevianamide E is a specific substrate of the prenyltransferase notC for normal prenylation at C-7 to produce 6-hydroxy-7-prenyl-deoxybrevianamide, also called notoamide S. As the proposed pivotal branching point in notoamide biosynthesis, notoamide S can be diverted to notoamide E through an oxidative pyran ring closure putatively catalyzed by either notH cytochrome P450 monooxygenase or the notD FAD-linked oxidoreductase. This step would be followed by an indole 2,3-epoxidation-initiated pinacol-like rearrangement catalyzed by the notB FAD-dependent monooxygenase leading to the formation of notoamide C and notoamide D. On the other hand notoamide S is converted to notoamide T by notH (or notD), a bifunctional oxidase that also functions as the intramolecular Diels-Alderase responsible for generation of (+)-notoamide T. To generate antipodal (-)-notoaminide T, notH' (or notD') in Aspergillus versicolor is expected to catalyze a Diels-Alder reaction leading to the opposite stereochemistry. The remaining oxidoreductase notD (or notH) likely catalyzes the oxidative pyran ring formation to yield (+)-stephacidin A. The FAD-dependent monooxygenase notI is highly similar to notB and is predicted to catalyze a similar conversion from (+)-stephacidin A to (-)-notoamide B via the 2,3-epoxidation of (+)-stephacidin A followed by a pinacol-type rearrangement. Finally, it remains unclear which enzyme could be responsible for the final hydroxylation steps leading to notoamide A and sclerotiamide. The function of notO in the notoamide biosynthesis has not been determined yet. The chain is NmrA-like family domain-containing oxidoreductase notO from Aspergillus sp. (strain MF297-2).